Consider the following 110-residue polypeptide: MKNVLIHKGATYKTRSNRRRKVRTPSGKLVNRRVKKHSKKHRCHECNAILGSIARMRPAEFSRQKVSARRVNRPYGATTCGRCVREKIISAFLGNEERIVMEKTGAAAGG.

Positions 1-41 are disordered; sequence MKNVLIHKGATYKTRSNRRRKVRTPSGKLVNRRVKKHSKKH. Basic residues predominate over residues 30–41; sequence VNRRVKKHSKKH.

The protein belongs to the eukaryotic ribosomal protein eL34 family.

This chain is Large ribosomal subunit protein eL34 (RPL34), found in Encephalitozoon cuniculi (strain GB-M1) (Microsporidian parasite).